A 242-amino-acid polypeptide reads, in one-letter code: Exosome complex component ski6 (242 aa).

Belongs to the RNase PH family. Component of the RNA exosome complex. Specifically part of the catalytically inactive RNA exosome core complex (Exo-9) which may associate with the catalytic subunits rrp6 and dis3 in cytoplasmic- and nuclear-specific RNA exosome complex forms. Exo-9 is formed by a hexameric base ring of RNase PH domain-containing subunits and a cap ring consisting of csl4, rrp4 and rrp40.

The protein resides in the cytoplasm. It is found in the nucleus. The protein localises to the nucleolus. Non-catalytic component of the RNA exosome complex which has 3'-&gt;5' exoribonuclease activity and participates in a multitude of cellular RNA processing and degradation events. In the nucleus, the RNA exosome complex is involved in proper maturation of stable RNA species such as rRNA, snRNA and snoRNA, in the elimination of RNA processing by-products and non-coding 'pervasive' transcripts, such as antisense RNA species and cryptic unstable transcripts (CUTs), and of mRNAs with processing defects, thereby limiting or excluding their export to the cytoplasm. In the cytoplasm, the RNA exosome complex is involved in general mRNA turnover and in RNA surveillance pathways, preventing translation of aberrant mRNAs. The catalytic inactive RNA exosome core complex of 9 subunits (Exo-9) is proposed to play a pivotal role in the binding and presentation of RNA for ribonucleolysis, and to serve as a scaffold for the association with catalytic subunits and accessory proteins or complexes. ski6 is part of the hexameric ring of RNase PH domain-containing subunits proposed to form a central channel which threads RNA substrates for degradation. The polypeptide is Exosome complex component ski6 (ski6) (Schizosaccharomyces pombe (strain 972 / ATCC 24843) (Fission yeast)).